The chain runs to 1517 residues: DNA-directed RNA polymerase subunit beta' (1517 aa).

The Zn(2+) site is built by cysteine 71, cysteine 73, cysteine 86, and cysteine 89. Residues aspartate 482, aspartate 484, and aspartate 486 each coordinate Mg(2+). Zn(2+) is bound by residues cysteine 812, cysteine 886, cysteine 893, and cysteine 896.

The protein belongs to the RNA polymerase beta' chain family. The RNAP catalytic core consists of 2 alpha, 1 beta, 1 beta' and 1 omega subunit. When a sigma factor is associated with the core the holoenzyme is formed, which can initiate transcription. Requires Mg(2+) as cofactor. It depends on Zn(2+) as a cofactor.

It carries out the reaction RNA(n) + a ribonucleoside 5'-triphosphate = RNA(n+1) + diphosphate. Functionally, DNA-dependent RNA polymerase catalyzes the transcription of DNA into RNA using the four ribonucleoside triphosphates as substrates. In Campylobacter jejuni subsp. jejuni serotype O:6 (strain 81116 / NCTC 11828), this protein is DNA-directed RNA polymerase subunit beta'.